Here is a 221-residue protein sequence, read N- to C-terminus: Membrane protein 0 (221 aa).

The interval Met-1–Gly-22 is disordered. A PPXY motif motif is present at residues Pro-44 to Tyr-47. The chain crosses the membrane as a helical span at residues Phe-100–Phe-120.

It belongs to the varicellovirus ORF0 protein family. In terms of assembly, interacts with host ITCH; this interaction probably mediates ITCH degradation.

Its subcellular location is the host Golgi apparatus membrane. The protein is Membrane protein 0 of Homo sapiens (Human).